The chain runs to 672 residues: Peptidoglycan D,D-transpeptidase MrdA (672 aa).

A helical membrane pass occupies residues 21–41 (IFFAVGLVIICLLVLASRYAY). The active-site Acyl-ester intermediate is Ser-326. Zn(2+)-binding residues include Asp-350, Asp-365, His-371, and Cys-384. Positions 616–672 (ANHQVNGGLMTAGIKPGELPSGNESASSTPATSAPTSAAASTPQATPTRPATNEVDE) are disordered. Low complexity predominate over residues 640 to 672 (SASSTPATSAPTSAAASTPQATPTRPATNEVDE).

The protein belongs to the transpeptidase family. MrdA subfamily. As to quaternary structure, monomer. It depends on Zn(2+) as a cofactor.

The protein localises to the cell inner membrane. It catalyses the reaction Preferential cleavage: (Ac)2-L-Lys-D-Ala-|-D-Ala. Also transpeptidation of peptidyl-alanyl moieties that are N-acyl substituents of D-alanine.. It functions in the pathway cell wall biogenesis; peptidoglycan biosynthesis. With respect to regulation, inhibited by the beta-lactams sulbactam and piperacillin-tazobactam. In terms of biological role, catalyzes cross-linking of the peptidoglycan cell wall. Involved in the determination of the rod shape of the cell. In Acinetobacter baumannii (strain ATCC 19606 / DSM 30007 / JCM 6841 / CCUG 19606 / CIP 70.34 / NBRC 109757 / NCIMB 12457 / NCTC 12156 / 81), this protein is Peptidoglycan D,D-transpeptidase MrdA.